The following is a 414-amino-acid chain: MDKDYSAPNFLGESSGGNDDNSSGMIDYMFNRNLQQQQKQSMPQQQQHQLSPSGFGATPFDKMNFSDVMQFADFGSKLALNQTRNQDDQETGIDPVYFLKFPVLNDKIEDHNQTQHLMPSHQTSQEGGECGGNIGNVFLEEKEDQDDDNDNNSVQLRFIGGEEEDRENKNVTKKEVKSKRKRARTSKTSEEVESQRMTHIAVERNRRKQMNEHLRVLRSLMPGSYVQRGDQASIIGGAIEFVRELEQLLQCLESQKRRRILGETGRDMTTTTTSSSSPITTVANQAQPLIITGNVTELEGGGGLREETAENKSCLADVEVKLLGFDAMIKILSRRRPGQLIKTIAALEDLHLSILHTNITTMEQTVLYSFNVKITSETRFTAEDIASSIQQIFSFIHANTNISGSSNLGNIVFT.

Disordered regions lie at residues 1–61 (MDKD…TPFD) and 142–197 (KEDQ…SQRM). 2 stretches are compositionally biased toward low complexity: residues 12 to 24 (GESSGGNDDNSSG) and 35 to 49 (QQQQKQSMPQQQQHQ). The span at 166-175 (RENKNVTKKE) shows a compositional bias: basic and acidic residues. Residues 176–185 (VKSKRKRART) show a composition bias toward basic residues. The span at 187-197 (KTSEEVESQRM) shows a compositional bias: basic and acidic residues. The region spanning 194-245 (SQRMTHIAVERNRRKQMNEHLRVLRSLMPGSYVQRGDQASIIGGAIEFVREL) is the bHLH domain. Residues 249 to 253 (LQCLE) carry the LxCxE motif motif.

Interacts with FAMA through its LxCxE motif. Self-interacts. Also interacts with bHLH071 and bHLH093. Interacts with RBR1. In terms of tissue distribution, resctricted to stomatal cell lineages (at protein level). Expressed in roots, leaves, stems, and flowers.

The protein localises to the nucleus. Transcription activator. Together with MYB88 and MYB124, ensures that stomata contain just two guard cells (GCs) by enforcing a single symmetric precursor cell division before stomatal maturity. Together with SPCH and MUTE, regulates the stomata formation. Required to promote differentiation and morphogenesis of stomatal guard cells and to halt proliferative divisions in their immediate precursors. Mediates the formation of stomata. Prevents histone H3K27me3 marks and derepresses stem cell gene expression. In Arabidopsis thaliana (Mouse-ear cress), this protein is Transcription factor FAMA (FAMA).